The chain runs to 108 residues: Histone H4 (108 aa).

The disordered stretch occupies residues 1 to 24 (MTGRGKGGKVLSLGGKGGKGAKRH). The DNA-binding element occupies 17–21 (GGKGA).

It belongs to the histone H4 family. The nucleosome is a histone octamer containing two molecules each of H2A, H2B, H3 and H4 assembled in one H3-H4 heterotetramer and two H2A-H2B heterodimers. The octamer wraps approximately 147 bp of DNA.

It is found in the nucleus. It localises to the chromosome. In terms of biological role, core component of nucleosome. Nucleosomes wrap and compact DNA into chromatin, limiting DNA accessibility to the cellular machineries which require DNA as a template. Histones thereby play a central role in transcription regulation, DNA repair, DNA replication and chromosomal stability. DNA accessibility is regulated via a complex set of post-translational modifications of histones, also called histone code, and nucleosome remodeling. This is Histone H4 from Mastigamoeba balamuthi (Phreatamoeba balamuthi).